The chain runs to 405 residues: Nuclear hormone receptor family member nhr-199 (405 aa).

The segment at residues 20–111 is a DNA-binding region (nuclear receptor); sequence IPYCLICSEV…MGMQRSSVQQ (92 aa). 2 consecutive NR C4-type zinc fingers follow at residues 23-44 and 60-94; these read CLIC…CRAC and CGRN…CKAC. The 251-residue stretch at 126 to 376 folds into the NR LBD domain; that stretch reads RGKPVLNKLR…PFSRIHGNQK (251 aa).

Belongs to the nuclear hormone receptor family.

The protein localises to the nucleus. Its function is as follows. Orphan nuclear receptor. This chain is Nuclear hormone receptor family member nhr-199 (nhr-199), found in Caenorhabditis elegans.